The chain runs to 99 residues: Protein AC4 (99 aa).

The protein belongs to the geminiviridae protein AC4/C4 family.

Its function is as follows. Pathogenicity determinant. May act as a suppressor of RNA-mediated gene silencing, also known as post-transcriptional gene silencing (PTGS), a mechanism of plant viral defense that limits the accumulation of viral RNAs. The sequence is that of Protein AC4 from Glycine max (Soybean).